Reading from the N-terminus, the 802-residue chain is Probable inactive leucine-rich repeat receptor-like protein kinase At3g03770 (802 aa).

An N-terminal signal peptide occupies residues 1-26 (MEKLYCGMPLLLLVLLLASIDGSTQL). Over 27-391 (QSSQSQTLLR…RNKVSKVGIA (365 aa)) the chain is Extracellular. Residues asparagine 52 and asparagine 83 are each glycosylated (N-linked (GlcNAc...) asparagine). 11 LRR repeats span residues 71-94 (EDSVTQLHIIGDNGTHMLPKSFSI), 104-128 (LPDVKVLTFVSLGLWGWLPQKINRL), 129-152 (SSLEILNVSSNFLFGPIPHELSSL), 153-176 (ATLQTLILDENMFSGELPDWIDSL), 177-200 (PSLAVLSLRKNVLNGSLPSSLSSL), 201-225 (SGLRVLALANNRFNGALPDLSHLTN), 227-244 (QVLDLEGNSFGPLFPRLS), 245-268 (NKLVTLILSKNKFRSAVSAEEVSS), 269-293 (LYQLQHLDLSYNTFVGPFPTSLMSL), 294-317 (PAITYLNISHNKLTGRLSANLSCN), and 319-341 (QLMFVDMSSNLLTGSLPTCLKPS). An N-linked (GlcNAc...) asparagine glycan is attached at asparagine 135. A glycan (N-linked (GlcNAc...) asparagine) is linked at asparagine 190. Asparagine 300 and asparagine 313 each carry an N-linked (GlcNAc...) asparagine glycan. Residues 392–412 (LGVTASILGVLLLAGALFVVL) form a helical membrane-spanning segment. At 413 to 802 (RRLNAKKTVT…RDSGCEEHER (390 aa)) the chain is on the cytoplasmic side. Residues 477–759 (FESSAFMGEG…FASQVQEGWL (283 aa)) form the Protein kinase domain. Positions 761-802 (NSNPSSNLGSPSPAASSLPPPSRLHVTTLESPRDSGCEEHER) are disordered. The span at 762–777 (SNPSSNLGSPSPAASS) shows a compositional bias: low complexity. Positions 791–802 (SPRDSGCEEHER) are enriched in basic and acidic residues.

Belongs to the protein kinase superfamily. Ser/Thr protein kinase family.

The protein localises to the cell membrane. The sequence is that of Probable inactive leucine-rich repeat receptor-like protein kinase At3g03770 from Arabidopsis thaliana (Mouse-ear cress).